We begin with the raw amino-acid sequence, 192 residues long: Xanthine phosphoribosyltransferase (192 aa).

Xanthine-binding residues include Leu20 and Asn27. Position 128–132 (128–132 (ANGQA)) interacts with 5-phospho-alpha-D-ribose 1-diphosphate. Lys156 lines the xanthine pocket.

Belongs to the purine/pyrimidine phosphoribosyltransferase family. Xpt subfamily. In terms of assembly, homodimer.

It localises to the cytoplasm. The enzyme catalyses XMP + diphosphate = xanthine + 5-phospho-alpha-D-ribose 1-diphosphate. The protein operates within purine metabolism; XMP biosynthesis via salvage pathway; XMP from xanthine: step 1/1. Functionally, converts the preformed base xanthine, a product of nucleic acid breakdown, to xanthosine 5'-monophosphate (XMP), so it can be reused for RNA or DNA synthesis. The chain is Xanthine phosphoribosyltransferase from Listeria monocytogenes serotype 4b (strain CLIP80459).